The chain runs to 461 residues: 3-deoxy-D-manno-octulosonic acid transferase (461 aa).

The chain crosses the membrane as a helical; Signal-anchor span at residues 2 to 22 (MLLYYTLSFILLPVYFIIIFI). The RPE1 insert domain maps to 47 to 88 (SALDFIQMSVNKEGFTDHKTTSYVDMHRNASLMYKLSLERSY). The active-site Proton acceptor is glutamate 102. CMP-binding positions include 306-307 (PR), 347-349 (FGE), and 372-375 (NILE).

Belongs to the glycosyltransferase group 1 family. Glycosyltransferase 30 subfamily.

The protein localises to the cell inner membrane. It carries out the reaction lipid IVA (E. coli) + CMP-3-deoxy-beta-D-manno-octulosonate = alpha-Kdo-(2-&gt;6)-lipid IVA (E. coli) + CMP + H(+). It participates in bacterial outer membrane biogenesis; LPS core biosynthesis. Functionally, involved in lipopolysaccharide (LPS) biosynthesis. Catalyzes the transfer of 3-deoxy-D-manno-octulosonate (Kdo) residue(s) from CMP-Kdo to lipid IV(A), the tetraacyldisaccharide-1,4'-bisphosphate precursor of lipid A. This chain is 3-deoxy-D-manno-octulosonic acid transferase (waaA), found in Rickettsia prowazekii (strain Madrid E).